The primary structure comprises 141 residues: Nucleoside diphosphate kinase (141 aa).

Residues lysine 11, phenylalanine 59, arginine 87, threonine 93, arginine 104, and asparagine 114 each contribute to the ATP site. The active-site Pros-phosphohistidine intermediate is the histidine 117.

It belongs to the NDK family. As to quaternary structure, homotetramer. Mg(2+) serves as cofactor.

It localises to the cytoplasm. The catalysed reaction is a 2'-deoxyribonucleoside 5'-diphosphate + ATP = a 2'-deoxyribonucleoside 5'-triphosphate + ADP. The enzyme catalyses a ribonucleoside 5'-diphosphate + ATP = a ribonucleoside 5'-triphosphate + ADP. In terms of biological role, major role in the synthesis of nucleoside triphosphates other than ATP. The ATP gamma phosphate is transferred to the NDP beta phosphate via a ping-pong mechanism, using a phosphorylated active-site intermediate. The sequence is that of Nucleoside diphosphate kinase from Burkholderia mallei (strain NCTC 10247).